We begin with the raw amino-acid sequence, 222 residues long: Apoptosis regulator OPG045 (222 aa).

This sequence belongs to the orthopoxvirus OPG045 family. Homodimer. Interacts with host pro-apoptotic protein BCL2L11 (via BH3 domain). Interacts with host NLRP1. Interacts with host BAK.

It is found in the host mitochondrion outer membrane. The protein localises to the host cytoplasm. Plays a role in evading host innate immune response by inhibiting host inflammasome activation. Interacts with and inhibits NLR-mediated interleukin-1 beta/IL1B production in infected cells. At the host mitochondria outer membrane, interacts with the BH3 domain of host BAK and prevents BAK from binding active BAX. In turn, host apoptosis is inhibited. The chain is Apoptosis regulator OPG045 (OPG045) from Homo sapiens (Human).